The following is a 63-amino-acid chain: Conotoxin p5a (63 aa).

The signal sequence occupies residues 1–19 (MRCLPVFVILLLLIPSAPC). The propeptide occupies 20-50 (VDAHPKTKDDMPLASFHDNAKGTLQRFWKKR). 2 disulfides stabilise this stretch: cysteine 52–cysteine 59 and cysteine 53–cysteine 60. Leucine 62 is modified (leucine amide).

As to expression, expressed by the venom duct.

It is found in the secreted. Its function is as follows. In vivo, low levels of the peptide injected into male specimens of the Siamese fighting fish causes an immediate aggressive display in this fish in response to their reflection when placed in a mirrored aquarium; High levels of the peptide suppressed this behavior. No effect is observed when injected into mice. The polypeptide is Conotoxin p5a (Conus purpurascens (Purple cone)).